Consider the following 77-residue polypeptide: Acyl carrier protein (77 aa).

The region spanning 2–77 (SDIAARVKKI…DATKFISEAQ (76 aa)) is the Carrier domain. S37 carries the O-(pantetheine 4'-phosphoryl)serine modification.

It belongs to the acyl carrier protein (ACP) family. In terms of processing, 4'-phosphopantetheine is transferred from CoA to a specific serine of apo-ACP by AcpS. This modification is essential for activity because fatty acids are bound in thioester linkage to the sulfhydryl of the prosthetic group.

It is found in the cytoplasm. The protein operates within lipid metabolism; fatty acid biosynthesis. Functionally, carrier of the growing fatty acid chain in fatty acid biosynthesis. This chain is Acyl carrier protein, found in Jannaschia sp. (strain CCS1).